The following is a 437-amino-acid chain: Four-jointed box protein 1 (437 aa).

The N-terminal stretch at 1–24 is a signal peptide; sequence MGRRMRGAAATAGLWLLALGSLLA. Disordered stretches follow at residues 33–66 and 88–116; these read RTEL…PLPP and AGAD…EESA. Residues 57-66 are compositionally biased toward pro residues; it reads APAPRFPLPP. Asn248 carries N-linked (GlcNAc...) asparagine glycosylation.

It belongs to the FJX1/FJ family. Glycosylated. In terms of processing, undergoes proteolytic cleavage.

The protein resides in the secreted. Functionally, acts as an inhibitor of dendrite extension and branching. This chain is Four-jointed box protein 1 (FJX1), found in Homo sapiens (Human).